Consider the following 73-residue polypeptide: UPF0499 protein NFIA_054990 (73 aa).

The first 20 residues, 1–20 (MKSFNLLSLSLLLAIASAAA), serve as a signal peptide directing secretion. Cystine bridges form between C46–C60, C50–C63, and C56–C70.

It belongs to the UPF0499 family.

The protein resides in the secreted. The protein is UPF0499 protein NFIA_054990 of Neosartorya fischeri (strain ATCC 1020 / DSM 3700 / CBS 544.65 / FGSC A1164 / JCM 1740 / NRRL 181 / WB 181) (Aspergillus fischerianus).